A 96-amino-acid chain; its full sequence is UPF0235 protein Sputcn32_2690 (96 aa).

The protein belongs to the UPF0235 family.

The sequence is that of UPF0235 protein Sputcn32_2690 from Shewanella putrefaciens (strain CN-32 / ATCC BAA-453).